Here is a 157-residue protein sequence, read N- to C-terminus: UPF0251 protein CLD_3165 (157 aa).

This sequence belongs to the UPF0251 family.

The sequence is that of UPF0251 protein CLD_3165 from Clostridium botulinum (strain Okra / Type B1).